Here is a 313-residue protein sequence, read N- to C-terminus: PGR5-like protein 1B, chloroplastic (313 aa).

The transit peptide at 1–49 directs the protein to the chloroplast; the sequence is MAFTLTIPRFSAISRKPITCSSSRTQCPAPFTHGRSISLRRRLTLLPLK. At alanine 50 the chain carries N-acetylalanine. Over 50 to 187 the chain is Stromal; the sequence is ASTDQSGQVG…KVYSDLAIDY (138 aa). The cysteines at positions 71 and 172 are disulfide-linked. Residues 188-208 traverse the membrane as a helical segment; sequence FKMFLLNVPATVVALGLFFFL. Residues 209–225 are Lumenal, thylakoid-facing; it reads DDITGFEITYLLELPEP. Residues 226–246 traverse the membrane as a helical segment; the sequence is FSFIFTWFAAVPAIVYLALSL. The Stromal portion of the chain corresponds to 247-313; the sequence is TKLILKDFLI…LITLPEGGKA (67 aa).

This sequence belongs to the PGR5 family. In terms of assembly, homodimer and heterodimer with PGR5. Interacts with PGR5, FD2, psaD1, LFNR1 and LFNR2. Also interacts with petC and a Fe-containing cofactor (FCC). Disulfide bonds; Cys-289 and Cys-292 are probably involved in the formation of disulfide bridges with 'Cys-11' and 'Cys-105' of PGR5 while Cys-261 and Cys-264 are probably involved in the binding of a Fe-containing cofactor (FCC).

The protein resides in the plastid. Its subcellular location is the chloroplast thylakoid membrane. Its activity is regulated as follows. Inhibited by antimycin A. Ferredoxin-plastoquinone reductase involved in cyclic electron flow (CEF) around photosystem I. The homodimer is probably not involved in CEF. This Arabidopsis thaliana (Mouse-ear cress) protein is PGR5-like protein 1B, chloroplastic (PGRL1B).